The primary structure comprises 193 residues: dCTP deaminase (193 aa).

Residues 110 to 115 (RSSLAR), Asp-128, 136 to 138 (VLE), Tyr-171, Lys-178, and Gln-182 each bind dCTP. Catalysis depends on Glu-138, which acts as the Proton donor/acceptor. The segment at 173-193 (KRKNAKYKDQQDAVASRISQD) is disordered.

The protein belongs to the dCTP deaminase family. Homotrimer.

It carries out the reaction dCTP + H2O + H(+) = dUTP + NH4(+). The protein operates within pyrimidine metabolism; dUMP biosynthesis; dUMP from dCTP (dUTP route): step 1/2. Functionally, catalyzes the deamination of dCTP to dUTP. The sequence is that of dCTP deaminase from Shewanella sp. (strain ANA-3).